Reading from the N-terminus, the 85-residue chain is MAHKKGGGSTKNGRDSNPKYLGVKAAGGSTVAAGTIILRQRGTVIKPGVNAGIGRDHTIFALVDGIVSFRNGRNNKKQVSVEPCC.

Positions 1–21 (MAHKKGGGSTKNGRDSNPKYL) are disordered.

The protein belongs to the bacterial ribosomal protein bL27 family.

The sequence is that of Large ribosomal subunit protein bL27 from Chlorobium chlorochromatii (strain CaD3).